Here is a 120-residue protein sequence, read N- to C-terminus: Large ribosomal subunit protein uL18 (120 aa).

Part of the 50S ribosomal subunit; part of the 5S rRNA/L5/L18/L25 subcomplex. Contacts the 5S and 23S rRNAs.

Its function is as follows. This is one of the proteins that bind and probably mediate the attachment of the 5S RNA into the large ribosomal subunit, where it forms part of the central protuberance. The protein is Large ribosomal subunit protein uL18 of Rhodopseudomonas palustris (strain ATCC BAA-98 / CGA009).